The primary structure comprises 139 residues: Putative pre-16S rRNA nuclease (139 aa).

The protein belongs to the YqgF nuclease family.

Its subcellular location is the cytoplasm. Functionally, could be a nuclease involved in processing of the 5'-end of pre-16S rRNA. The polypeptide is Putative pre-16S rRNA nuclease (Streptococcus pneumoniae serotype 19F (strain G54)).